Here is a 384-residue protein sequence, read N- to C-terminus: UDP-N-acetylglucosamine--N-acetylmuramyl-(pentapeptide) pyrophosphoryl-undecaprenol N-acetylglucosamine transferase (384 aa).

Residues 17–19 (TGG), asparagine 131, arginine 172, serine 200, and glutamine 301 each bind UDP-N-acetyl-alpha-D-glucosamine.

The protein belongs to the glycosyltransferase 28 family. MurG subfamily.

The protein localises to the cell inner membrane. It catalyses the reaction di-trans,octa-cis-undecaprenyl diphospho-N-acetyl-alpha-D-muramoyl-L-alanyl-D-glutamyl-meso-2,6-diaminopimeloyl-D-alanyl-D-alanine + UDP-N-acetyl-alpha-D-glucosamine = di-trans,octa-cis-undecaprenyl diphospho-[N-acetyl-alpha-D-glucosaminyl-(1-&gt;4)]-N-acetyl-alpha-D-muramoyl-L-alanyl-D-glutamyl-meso-2,6-diaminopimeloyl-D-alanyl-D-alanine + UDP + H(+). Its pathway is cell wall biogenesis; peptidoglycan biosynthesis. Cell wall formation. Catalyzes the transfer of a GlcNAc subunit on undecaprenyl-pyrophosphoryl-MurNAc-pentapeptide (lipid intermediate I) to form undecaprenyl-pyrophosphoryl-MurNAc-(pentapeptide)GlcNAc (lipid intermediate II). The sequence is that of UDP-N-acetylglucosamine--N-acetylmuramyl-(pentapeptide) pyrophosphoryl-undecaprenol N-acetylglucosamine transferase from Granulibacter bethesdensis (strain ATCC BAA-1260 / CGDNIH1).